Consider the following 1102-residue polypeptide: MDYDLFQSDDEEILATFIQATQKQETLSAQIDVDDSEEDLVDGLHLPEFNCSGRDTLKSQLCEGGFLGNGYAQLDPPRSRLDYLCFDFAPAQLAVGAVRNYLYGEACKNVQKLLTVVMGQQHLQATAASMNSGWYRVRQQVTHFYHLMLLLRGNELLPSHFLDGFRQLLNDQLDADTWKVLYFAEHNKGNDCQAPAYHLYHGVLEWRFLDLHILYASGNDQAFLGQLERTLDDLIVCAGHHYRSKHRSELIHSSPFMCRCNKELWLLLKRLIPKWLGERELDFWTLFHKAMQRHKSLHFQGESNAISLAYHELYSWLRLGLARLDEYNSEGWYQPDHSPLTAAPESFQTASLLKQFLASQPDEQQRRVYLIQLSPLQLQLGKPDTDVLCQLWEYFHRSLNCNFSVGTELDQLPLTCSNGSAYVDRYNKLLSKSHIEDLNLSSFTMYAWMLGKTLKLLPSQGRSNQRQKLLGRIFSKFSAAKLLALNEPGIHHVIELFLCLLLCHEDLSELAPKLREMLLCLALEKLPPVRRILVAKGHMALLLLHAQHRLSMDDYVSKLLNQLATIRNDAEVGAIYVGSLQAIFNLADDFNRGEQQLLGPWLAHYVEKCGQASQDRVWQTLHNLILRLSERRAVAGNASGIKEALQQHIMPLVRTQYVSSHSSWLPKLAANFIALENNGDKLLLGFLQGPEPINMAASAQLLLQVLEDGGRPASSTILQVWVKSLVLLNAQHESVLALMPHVTQLEEFRLLAIDPTSLEGGREPLCAFFGALGRRAQQEEAAAHVRMQLSHKLHAYVNHFELWLPPDRSRSELGSRFYSFLAIVIYNCSTLAYVRSKPSCFFHLAMVRFLLTTQLQAGVPPEGRLPQVVHKIFPVLLQGIGRLPYRTDAYVAKTLEQLVQHWTPHFSFSSNAKLVARPYATLLQADVDGELAQFVLQLLVTQFLVVQRRRAGQHAGLVITIMQQLIESTGKEQEEQLLTVLRGVHIPLLEHVMFVDEVDLSRNQVFGLYKVLISHDAYKRSQAVRDMCSNHLRSLAEKHLAHCTYFYFQMLINLAELAPDLVAPILSFIREQAEQVELKRGAGEDVGIRKCLQRLQKVLSRV.

Belongs to the MMS22 family. MMS22L subfamily.

It localises to the nucleus. The protein resides in the chromosome. Its function is as follows. Involved in recombination-dependent repair of stalled or collapsed replication forks. This Drosophila melanogaster (Fruit fly) protein is Protein MMS22-like.